The primary structure comprises 172 residues: Adenine phosphoribosyltransferase (172 aa).

It belongs to the purine/pyrimidine phosphoribosyltransferase family. Homodimer.

It is found in the cytoplasm. It carries out the reaction AMP + diphosphate = 5-phospho-alpha-D-ribose 1-diphosphate + adenine. Its pathway is purine metabolism; AMP biosynthesis via salvage pathway; AMP from adenine: step 1/1. Catalyzes a salvage reaction resulting in the formation of AMP, that is energically less costly than de novo synthesis. In Streptococcus agalactiae serotype Ia (strain ATCC 27591 / A909 / CDC SS700), this protein is Adenine phosphoribosyltransferase.